We begin with the raw amino-acid sequence, 149 residues long: Cytochrome c-type biogenesis protein CcmE (149 aa).

Residues 1 to 7 lie on the Cytoplasmic side of the membrane; sequence MKPRHKK. Residues 8-28 form a helical; Signal-anchor for type II membrane protein membrane-spanning segment; it reads MAVIALSVSALTVAVVLVLNA. The Periplasmic portion of the chain corresponds to 29–149; that stretch reads FQSNLVFFFS…AKAQKTSLAQ (121 aa). 2 residues coordinate heme: histidine 123 and tyrosine 127.

The protein belongs to the CcmE/CycJ family.

The protein localises to the cell inner membrane. In terms of biological role, heme chaperone required for the biogenesis of c-type cytochromes. Transiently binds heme delivered by CcmC and transfers the heme to apo-cytochromes in a process facilitated by CcmF and CcmH. This Nitrosomonas europaea (strain ATCC 19718 / CIP 103999 / KCTC 2705 / NBRC 14298) protein is Cytochrome c-type biogenesis protein CcmE.